Consider the following 93-residue polypeptide: LSM complex subunit LSM5 (93 aa).

Residues 7–87 (LPLEVIDKTI…IAILVPGGKK (81 aa)) form the Sm domain.

Belongs to the snRNP Sm proteins family. In terms of assembly, component of the heptameric LSM1-LSM7 complex that forms a seven-membered ring structure with a donut shape. The LSm subunits are arranged in the order LSM1, LSM2, LSM3, LSM6, LSM5, LSM7 and LSM4. Except for LSM1, where a C-terminal helix crosses the ring structure to form additional interactions with LSM3 and LSM6, each subunit interacts only with its two neighboring subunits. The LSM1-LSM7 complex interacts with PAT1; within the complex PAT1 has direct interactions with LSM2 and LSM3. The LSM1-LSM7 complex interacts with XRN1. Component of the heptameric LSM2-LSM8 complex that forms a seven-membered ring structure with a donut shape; an RNA strand can pass through the hole in the center of the ring structure. The LSm subunits are arranged in the order LSM8, LSM2, LSM3, LSM6, LSM5, LSM7 and LSM4. Component of the spliceosome U4/U6-U5 tri-snRNP complex composed of the U4, U6 and U5 snRNAs and at least PRP3, PRP4, PRP6, PRP8, PRP18, PRP31, PRP38, SNU13, SNU23, SNU66, SNU114, SPP381, SMB1, SMD1, SMD2, SMD3, SMX2, SMX3, LSM2, LSM3, LSM4, LSM5, LSM6, LSM7, LSM8, BRR2 and DIB1. May be found in a complex comprising LSM2-LSM7 without LSM1 or LSM8; the complex associates with pre-P RNA and snoRNA SNR5.

The protein resides in the nucleus. It is found in the nucleolus. It localises to the cytoplasm. In terms of biological role, component of LSm protein complexes, which are involved in RNA processing and may function in a chaperone-like manner. Component of the cytoplasmic LSM1-LSM7 complex which is involved in mRNA degradation by activating the decapping step. Together with PAT1, the LSM1-LSM7 complex binds to osmotic stress-activated mRNAs to attenuate the osmotic stress response, probably by limiting ribosome access to the mRNA and consequently translation. Component of the nuclear LSM2-LSM8 complex, which is involved in spliceosome assembly. The LSM2-LSM8 complex plays a role in the biogenesis of the spliceosomal U4/U6-U5 tri-snRNP complex by accelerating PRP24-mediated annealing of U4/U6 di-snRNA. The LSM2-LSM8 complex binds U6 snRNA terminating with a non-cyclic 3' phosphate group. LSM2-LSM8 is probably also involved in degradation of nuclear pre-mRNA by targeting them for decapping. LSM2-LSM8 could be involved in processing of pre-tRNAs, pre-rRNAs and U3 snoRNA, although involvement may be indirect. In a complex that probably contains LSM2-LSM7, but not LSM1 or LSM8, associates with the precursor of the RNA component of RNase P (pre-P RNA) and may be involved in maturing pre-P RNA; the complex also associates with snoRNA SNR5. In Saccharomyces cerevisiae (strain ATCC 204508 / S288c) (Baker's yeast), this protein is LSM complex subunit LSM5 (LSM5).